Consider the following 286-residue polypeptide: Phosphate import ATP-binding protein PstB (286 aa).

One can recognise an ABC transporter domain in the interval 40–281; that stretch reads VVAKDFSIFY…PRDRMTEDYI (242 aa). 72-79 is an ATP binding site; the sequence is GPSGCGKS.

This sequence belongs to the ABC transporter superfamily. Phosphate importer (TC 3.A.1.7) family. As to quaternary structure, the complex is composed of two ATP-binding proteins (PstB), two transmembrane proteins (PstC and PstA) and a solute-binding protein (PstS).

Its subcellular location is the cell inner membrane. It catalyses the reaction phosphate(out) + ATP + H2O = ADP + 2 phosphate(in) + H(+). Its function is as follows. Part of the ABC transporter complex PstSACB involved in phosphate import. Responsible for energy coupling to the transport system. The chain is Phosphate import ATP-binding protein PstB from Chlorobium luteolum (strain DSM 273 / BCRC 81028 / 2530) (Pelodictyon luteolum).